We begin with the raw amino-acid sequence, 245 residues long: Cuticle protein (245 aa).

The Chitin-binding type R&amp;R domain occupies 25 to 86 (VSYAAAPALV…TGDSKSQQES (62 aa)). The segment at 79–100 (DSKSQQESRSGDVVQGSYSVVD) is disordered. 3 repeat units span residues 92 to 95 (VQGS), 108 to 111 (VDYT), and 118 to 121 (FNAV).

In terms of biological role, component of the cuticle of African malaria mosquito. This Anopheles gambiae (African malaria mosquito) protein is Cuticle protein (Ccp84Ab).